The primary structure comprises 589 residues: Aspartate--tRNA(Asp/Asn) ligase (589 aa).

E175 contributes to the L-aspartate binding site. The aspartate stretch occupies residues 199-202 (QQLK). R221 provides a ligand contact to L-aspartate. Residues 221-223 (RDE) and Q230 contribute to the ATP site. Position 451 (H451) interacts with L-aspartate. E485 contacts ATP. An L-aspartate-binding site is contributed by R492. 537-540 (GIDR) provides a ligand contact to ATP.

Belongs to the class-II aminoacyl-tRNA synthetase family. Type 1 subfamily. In terms of assembly, homodimer.

It is found in the cytoplasm. It carries out the reaction tRNA(Asx) + L-aspartate + ATP = L-aspartyl-tRNA(Asx) + AMP + diphosphate. Its function is as follows. Aspartyl-tRNA synthetase with relaxed tRNA specificity since it is able to aspartylate not only its cognate tRNA(Asp) but also tRNA(Asn). Reaction proceeds in two steps: L-aspartate is first activated by ATP to form Asp-AMP and then transferred to the acceptor end of tRNA(Asp/Asn). This Roseiflexus sp. (strain RS-1) protein is Aspartate--tRNA(Asp/Asn) ligase.